The following is a 552-amino-acid chain: Probable protein kinase UbiB (552 aa).

The Protein kinase domain maps to 121–504 (HFDTVPLASA…QGLQRRVVNA (384 aa)). Residues 127–135 (LASASISQV) and Lys149 contribute to the ATP site. The active-site Proton acceptor is the Asp284. The next 2 membrane-spanning stretches (helical) occupy residues 501 to 521 (VVNAIVGSGLLVAAAVLYGLH) and 530 to 550 (IPVWSLISGCIGALALFSAWW).

This sequence belongs to the ABC1 family. UbiB subfamily.

It is found in the cell inner membrane. It participates in cofactor biosynthesis; ubiquinone biosynthesis [regulation]. Is probably a protein kinase regulator of UbiI activity which is involved in aerobic coenzyme Q (ubiquinone) biosynthesis. This is Probable protein kinase UbiB from Xylella fastidiosa (strain M23).